The sequence spans 214 residues: Phosphopantothenoylcysteine decarboxylase HAL3 (214 aa).

FMN-binding positions include 30–32 and 55–57; these read GSV and TRA. H92 acts as the Proton donor in catalysis. Residues 108–111 and A142 contribute to the FMN site; that span reads SANT. Residues N144, R174, and A176 each contribute to the N-[(R)-4-phosphopantothenoyl]-L-cysteine site. Residue C177 is the Proton donor of the active site. M185 is an N-[(R)-4-phosphopantothenoyl]-L-cysteine binding site.

Belongs to the HFCD (homooligomeric flavin containing Cys decarboxylase) superfamily. In terms of assembly, homotrimer. FMN is required as a cofactor. In terms of tissue distribution, mainly expressed in stems, to a lower extent in flowers, leaves and fruits, and at basal levels in roots.

It is found in the cell membrane. The protein localises to the cytoplasm. It catalyses the reaction N-[(R)-4-phosphopantothenoyl]-L-cysteine + H(+) = (R)-4'-phosphopantetheine + CO2. Its pathway is cofactor biosynthesis; coenzyme A biosynthesis; CoA from (R)-pantothenate: step 3/5. Functionally, involved in plant growth, and promotes salt and osmotic tolerance, probably via coenzyme A (CoA) accumulation and endogenous proline accumulation. Catalyzes the decarboxylation of 4'-phosphopantothenoylcysteine to 4'-phosphopantetheine, a key step in coenzyme A biosynthesis. Required for roots development. The protein is Phosphopantothenoylcysteine decarboxylase HAL3 of Malus domestica (Apple).